The primary structure comprises 307 residues: Farnesol kinase, chloroplastic (307 aa).

Residues 1-65 (MATTSTTTKL…TKIRKSSLAA (65 aa)) constitute a chloroplast transit peptide. 7 consecutive transmembrane segments (helical) span residues 77–97 (VCAFGVTSIVAFSCLGFWGEI), 116–136 (IGLVFMLCWPLFSSGIQGALF), 137–157 (ASLVPGLNIVRMLLLGLGVYH), 177–194 (GPLYYVLSITSACIYYWK), 197–217 (PIAIAVICNLCAGDGMADIVG), 237–257 (IGMATAGFLASVAYMYYFASF), and 265–285 (GMILRFLVISIASALVESLPI).

It belongs to the polyprenol kinase family.

The protein localises to the plastid. Its subcellular location is the chloroplast membrane. The catalysed reaction is (2E,6E)-farnesol + CTP = (2E,6E)-farnesyl phosphate + CDP + H(+). It catalyses the reaction (2E,6E)-farnesol + ATP = (2E,6E)-farnesyl phosphate + ADP + H(+). It carries out the reaction (2E)-geraniol + ATP = (2E)-geranyl phosphate + ADP + H(+). The enzyme catalyses (2E,6E,10E)-geranylgeraniol + ATP = (2E,6E,10E)-geranylgeranyl phosphate + ADP + H(+). In terms of biological role, kinase involved in negative regulation of abscisic acid (ABA) signaling. Substrate preference is farnesol &gt; geraniol &gt; geranylgeraniol, but has no activity with farnesyl phosphate. Can use CTP &gt; ATP &gt; GTP = UTP as phosphoryl donor. The polypeptide is Farnesol kinase, chloroplastic (Arabidopsis thaliana (Mouse-ear cress)).